Reading from the N-terminus, the 226-residue chain is N-(5'-phosphoribosyl)anthranilate isomerase (226 aa).

Belongs to the TrpF family.

It catalyses the reaction N-(5-phospho-beta-D-ribosyl)anthranilate = 1-(2-carboxyphenylamino)-1-deoxy-D-ribulose 5-phosphate. The protein operates within amino-acid biosynthesis; L-tryptophan biosynthesis; L-tryptophan from chorismate: step 3/5. The protein is N-(5'-phosphoribosyl)anthranilate isomerase (TRP1) of Saccharomyces kudriavzevii (strain ATCC MYA-4449 / AS 2.2408 / CBS 8840 / NBRC 1802 / NCYC 2889) (Yeast).